The chain runs to 558 residues: Protein NRT1/ PTR FAMILY 2.3 (558 aa).

The next 12 membrane-spanning stretches (helical) occupy residues 33–53 (TLLG…VFLI), 69–89 (VANG…DSFF), 92–112 (IPVI…LTLI), 128–148 (VLCT…LALV), 176–196 (FFNW…TAIV), 203–223 (SWKL…IVFV), 329–349 (LWLS…LIVL), 371–391 (VIII…VFPM), 403–423 (LQKV…SAVV), 439–459 (VLWL…QFPA), 478–498 (SLTS…IDLI), and 517–537 (VYWL…VCSW).

The protein belongs to the major facilitator superfamily. Proton-dependent oligopeptide transporter (POT/PTR) (TC 2.A.17) family. As to expression, expressed in flowers, siliques and root epidermis or cortex. Detected in shoots.

It localises to the membrane. Functionally, transporter involved in a passive nitrate efflux. In Arabidopsis thaliana (Mouse-ear cress), this protein is Protein NRT1/ PTR FAMILY 2.3 (NPF2.3).